Here is a 173-residue protein sequence, read N- to C-terminus: NADH-quinone oxidoreductase subunit I 1 (173 aa).

2 4Fe-4S ferredoxin-type domains span residues 41-73 (IVLT…LAKA) and 83-112 (EHFR…LTPD). The [4Fe-4S] cluster site is built by cysteine 53, cysteine 56, cysteine 59, cysteine 63, cysteine 92, cysteine 95, cysteine 98, and cysteine 102.

It belongs to the complex I 23 kDa subunit family. In terms of assembly, NDH-1 is composed of 14 different subunits. Subunits NuoA, H, J, K, L, M, N constitute the membrane sector of the complex. The cofactor is [4Fe-4S] cluster.

The protein resides in the cell inner membrane. The catalysed reaction is a quinone + NADH + 5 H(+)(in) = a quinol + NAD(+) + 4 H(+)(out). Its function is as follows. NDH-1 shuttles electrons from NADH, via FMN and iron-sulfur (Fe-S) centers, to quinones in the respiratory chain. The immediate electron acceptor for the enzyme in this species is believed to be ubiquinone. Couples the redox reaction to proton translocation (for every two electrons transferred, four hydrogen ions are translocated across the cytoplasmic membrane), and thus conserves the redox energy in a proton gradient. The sequence is that of NADH-quinone oxidoreductase subunit I 1 from Rhodopseudomonas palustris (strain BisA53).